The following is a 254-amino-acid chain: MLKNKKSDNSLSRDTLQIKKRKKTTMAQNGSNTTVKLIGTWASPFAIRAQVALHLKSVEHEYVEETDVLKGKSDLLIKSNPIHKKVPVLIHGDVSICESLNIVQYVDESWPSDLSILPTLPSERAFARFWAHFVDGKLFESIDAVAGAKDDAARMTLAGNLMENLAALEEAFQKSSKGGDFFGGGNIGFVDITVGAIVGPISVIEAFSGVKFLRPDTTPGLIQWAEKFRAHEAVKPYMPTVAEFIEFAKKKFSV.

Positions 19–23 (KKRKK) match the Nuclear localization signal motif. The region spanning 33-114 (TTVKLIGTWA…YVDESWPSDL (82 aa)) is the GST N-terminal domain. Glutathione-binding positions include 43–44 (SP), 71–72 (GK), 85–86 (KV), and 98–99 (ES). Residues 120 to 252 (LPSERAFARF…EFIEFAKKKF (133 aa)) enclose the GST C-terminal domain.

The protein belongs to the GST superfamily. Tau family.

Its subcellular location is the nucleus. It catalyses the reaction RX + glutathione = an S-substituted glutathione + a halide anion + H(+). Its function is as follows. May be involved in the conjugation of reduced glutathione to a wide number of exogenous and endogenous hydrophobic electrophiles and have a detoxification role against certain herbicides. This Arabidopsis thaliana (Mouse-ear cress) protein is Glutathione S-transferase U12 (GSTU12).